Here is a 911-residue protein sequence, read N- to C-terminus: Protein translocase subunit SecA (911 aa).

ATP-binding positions include Gln87, 105 to 109 (GEGKT), and Asp510. Positions 896, 898, 907, and 908 each coordinate Zn(2+).

The protein belongs to the SecA family. In terms of assembly, monomer and homodimer. Part of the essential Sec protein translocation apparatus which comprises SecA, SecYEG and auxiliary proteins SecDF-YajC and YidC. It depends on Zn(2+) as a cofactor.

The protein resides in the cell inner membrane. Its subcellular location is the cytoplasm. It carries out the reaction ATP + H2O + cellular proteinSide 1 = ADP + phosphate + cellular proteinSide 2.. Its function is as follows. Part of the Sec protein translocase complex. Interacts with the SecYEG preprotein conducting channel. Has a central role in coupling the hydrolysis of ATP to the transfer of proteins into and across the cell membrane, serving both as a receptor for the preprotein-SecB complex and as an ATP-driven molecular motor driving the stepwise translocation of polypeptide chains across the membrane. This chain is Protein translocase subunit SecA, found in Acinetobacter baumannii (strain SDF).